A 302-amino-acid polypeptide reads, in one-letter code: 4-hydroxy-tetrahydrodipicolinate synthase (302 aa).

T46 is a binding site for pyruvate. The active-site Proton donor/acceptor is Y134. Residue K162 is the Schiff-base intermediate with substrate of the active site. V204 is a binding site for pyruvate.

Belongs to the DapA family. Homotetramer; dimer of dimers.

It is found in the cytoplasm. The enzyme catalyses L-aspartate 4-semialdehyde + pyruvate = (2S,4S)-4-hydroxy-2,3,4,5-tetrahydrodipicolinate + H2O + H(+). It participates in amino-acid biosynthesis; L-lysine biosynthesis via DAP pathway; (S)-tetrahydrodipicolinate from L-aspartate: step 3/4. In terms of biological role, catalyzes the condensation of (S)-aspartate-beta-semialdehyde [(S)-ASA] and pyruvate to 4-hydroxy-tetrahydrodipicolinate (HTPA). The protein is 4-hydroxy-tetrahydrodipicolinate synthase of Xanthomonas campestris pv. campestris (strain ATCC 33913 / DSM 3586 / NCPPB 528 / LMG 568 / P 25).